We begin with the raw amino-acid sequence, 472 residues long: Eukaryotic translation initiation factor 2 subunit 3, X-linked (472 aa).

Ala-2 carries the post-translational modification N-acetylalanine. Residue Ser-16 is modified to Phosphoserine. One can recognise a tr-type G domain in the interval 39 to 248; sequence QATINIGTIG…IVKKIPVPPR (210 aa). The G1 stretch occupies residues 48–55; that stretch reads GHVAHGKS. 51–56 is a GTP binding site; that stretch reads AHGKST. Positions 76-80 are G2; that stretch reads NITIK. The G3 stretch occupies residues 134–137; sequence DCPG. Residues 190–193 and 225–227 contribute to the GTP site; these read NKID and SAQ. The segment at 190–193 is G4; the sequence is NKID. The interval 225–227 is G5; sequence SAQ. Residues 457–469 are interacts with Cdc123; the sequence is GQIRRGVTIKPTV.

The protein belongs to the TRAFAC class translation factor GTPase superfamily. Classic translation factor GTPase family. EIF2G subfamily. As to quaternary structure, eukaryotic translation initiation factor 2 eIF2 is a heterotrimeric complex composed of an alpha (EIF2S1), a beta (EIF2S2) and a gamma (EIF2S3) chain. eIF2 is member of the 43S pre-initiation complex (43S PIC). Interacts (via C-terminus) with CDC123; the interaction is direct. As to expression, widely expressed.

Its subcellular location is the cytoplasm. The protein resides in the cytosol. The enzyme catalyses GTP + H2O = GDP + phosphate + H(+). Member of the eIF2 complex that functions in the early steps of protein synthesis by forming a ternary complex with GTP and initiator tRNA. This complex binds to a 40S ribosomal subunit, followed by mRNA binding to form the 43S pre-initiation complex (43S PIC). Junction of the 60S ribosomal subunit to form the 80S initiation complex is preceded by hydrolysis of the GTP bound to eIF2 and release of an eIF2-GDP binary complex. In order for eIF2 to recycle and catalyze another round of initiation, the GDP bound to eIF2 must exchange with GTP by way of a reaction catalyzed by eIF-2B. Along with its paralog on chromosome Y, may contribute to spermatogenesis up to the round spermatid stage. The protein is Eukaryotic translation initiation factor 2 subunit 3, X-linked (Eif2s3) of Rattus norvegicus (Rat).